Consider the following 406-residue polypeptide: MNKPVEPNSFRTGPDEQGMFGIFGGRFVAETLMPLILELEEHWNAAKNDPAFKAELQQLGAHYTGRPSPLYFAERLTEHLGGAKVYFKREELNHTGSHKVNNCLGQILLAKRMGKTRIIAETGAGQHGVASATVAARFGLPCVVYMGATDVERQAPNVFRMRLLGAEVKPVTSGHGTLKDAMNEALRDWVTNVEDTYYLIGTAAGPHPYPELVRDFQSVIGQETKEQILAAEGRLPDMLVAAVGGGSNAIGLFHPFLDDKGVAMVGVEAGGKGLEGDEHCASLTAGSPGVLHGNRTYLLQDSDGQIKEGHSISAGLDYPGIGPEHSWLKEAGRVEYVPIMDHEALEAFQLLTRLEGIIPALEPSHALAEVIKRAPKMGKDQIIVMNLSGRGDKDIFAVAKHLKMDV.

Lys99 carries the post-translational modification N6-(pyridoxal phosphate)lysine.

The protein belongs to the TrpB family. In terms of assembly, tetramer of two alpha and two beta chains. The cofactor is pyridoxal 5'-phosphate.

The enzyme catalyses (1S,2R)-1-C-(indol-3-yl)glycerol 3-phosphate + L-serine = D-glyceraldehyde 3-phosphate + L-tryptophan + H2O. The protein operates within amino-acid biosynthesis; L-tryptophan biosynthesis; L-tryptophan from chorismate: step 5/5. In terms of biological role, the beta subunit is responsible for the synthesis of L-tryptophan from indole and L-serine. The polypeptide is Tryptophan synthase beta chain (Chelativorans sp. (strain BNC1)).